Here is a 194-residue protein sequence, read N- to C-terminus: Crossover junction endodeoxyribonuclease RuvC (194 aa).

Active-site residues include Asp-8, Glu-72, and Asp-144. Residues Asp-8, Glu-72, and Asp-144 each coordinate Mg(2+).

Belongs to the RuvC family. In terms of assembly, homodimer which binds Holliday junction (HJ) DNA. The HJ becomes 2-fold symmetrical on binding to RuvC with unstacked arms; it has a different conformation from HJ DNA in complex with RuvA. In the full resolvosome a probable DNA-RuvA(4)-RuvB(12)-RuvC(2) complex forms which resolves the HJ. It depends on Mg(2+) as a cofactor.

Its subcellular location is the cytoplasm. The enzyme catalyses Endonucleolytic cleavage at a junction such as a reciprocal single-stranded crossover between two homologous DNA duplexes (Holliday junction).. The RuvA-RuvB-RuvC complex processes Holliday junction (HJ) DNA during genetic recombination and DNA repair. Endonuclease that resolves HJ intermediates. Cleaves cruciform DNA by making single-stranded nicks across the HJ at symmetrical positions within the homologous arms, yielding a 5'-phosphate and a 3'-hydroxyl group; requires a central core of homology in the junction. The consensus cleavage sequence is 5'-(A/T)TT(C/G)-3'. Cleavage occurs on the 3'-side of the TT dinucleotide at the point of strand exchange. HJ branch migration catalyzed by RuvA-RuvB allows RuvC to scan DNA until it finds its consensus sequence, where it cleaves and resolves the cruciform DNA. The polypeptide is Crossover junction endodeoxyribonuclease RuvC (Psychrobacter arcticus (strain DSM 17307 / VKM B-2377 / 273-4)).